The following is a 409-amino-acid chain: uncharacterized protein (409 aa).

Helical transmembrane passes span 20–40 (ILTM…VSML), 283–303 (FALL…IGVM), 344–364 (IGGI…TVIF), and 372–392 (IPAV…FGLL).

This sequence belongs to the ABC-4 integral membrane protein family.

The protein localises to the cell membrane. This is an uncharacterized protein from Bacillus subtilis (strain 168).